A 934-amino-acid chain; its full sequence is Sorting nexin-14 (934 aa).

2 helical membrane passes run tyrosine 27–tyrosine 47 and leucine 48–leucine 68. Positions proline 129 to proline 303 constitute a PXA domain. The RGS domain maps to aspartate 335–leucine 467. The 121-residue stretch at tryptophan 557–serine 677 folds into the PX domain.

Belongs to the sorting nexin family.

The protein localises to the lysosome membrane. Its subcellular location is the late endosome membrane. The protein resides in the cell projection. It is found in the dendrite. Plays a role in maintaining normal neuronal excitability and synaptic transmission. May be involved in several stages of intracellular trafficking. Required for autophagosome clearance, possibly by mediating the fusion of lysosomes with autophagosomes. Binds phosphatidylinositol 3,5-bisphosphate (PtdIns(3,5)P2), a key component of late endosomes/lysosomes. Does not bind phosphatidylinositol 3-phosphate (PtdIns(3P)). This chain is Sorting nexin-14, found in Danio rerio (Zebrafish).